Here is a 203-residue protein sequence, read N- to C-terminus: N-(5'-phosphoribosyl)anthranilate isomerase (203 aa).

This sequence belongs to the TrpF family.

The catalysed reaction is N-(5-phospho-beta-D-ribosyl)anthranilate = 1-(2-carboxyphenylamino)-1-deoxy-D-ribulose 5-phosphate. The protein operates within amino-acid biosynthesis; L-tryptophan biosynthesis; L-tryptophan from chorismate: step 3/5. The protein is N-(5'-phosphoribosyl)anthranilate isomerase of Listeria innocua serovar 6a (strain ATCC BAA-680 / CLIP 11262).